The primary structure comprises 448 residues: Porin AaxA (448 aa).

An N-terminal signal peptide occupies residues 1–24 (MASFRSSLLSALCAYGMMVMPAYA).

It belongs to the OprB family.

The protein localises to the cell outer membrane. Facilitates L-arginine uptake, as part of the AaxABC system. The arginine uptake by the bacterium in the macrophage may be a virulence factor against the host innate immune response. The chain is Porin AaxA (aaxA) from Chlamydia abortus (strain DSM 27085 / S26/3) (Chlamydophila abortus).